A 289-amino-acid polypeptide reads, in one-letter code: Probable protein phosphatase 2C 39 (289 aa).

The region spanning Thr41–Phe288 is the PPM-type phosphatase domain. Mn(2+) is bound by residues Asp78, Gly79, Asp240, and Asp279.

The protein belongs to the PP2C family. Mg(2+) serves as cofactor. Mn(2+) is required as a cofactor.

It catalyses the reaction O-phospho-L-seryl-[protein] + H2O = L-seryl-[protein] + phosphate. It carries out the reaction O-phospho-L-threonyl-[protein] + H2O = L-threonyl-[protein] + phosphate. The protein is Probable protein phosphatase 2C 39 of Arabidopsis thaliana (Mouse-ear cress).